A 74-amino-acid chain; its full sequence is Protein SlyX homolog (74 aa).

This sequence belongs to the SlyX family.

This chain is Protein SlyX homolog, found in Aliivibrio salmonicida (strain LFI1238) (Vibrio salmonicida (strain LFI1238)).